We begin with the raw amino-acid sequence, 985 residues long: Pro-apoptotic serine protease NMA111 (985 aa).

Positions 79–269 are serine protease; that stretch reads VVSIHFSQVA…LPLDRVVRAL (191 aa). Catalysis depends on charge relay system residues His-117, Asp-148, and Ser-231. PDZ domains are found at residues 287 to 385 and 771 to 847; these read WVLK…TVGD and PEEW…VRDA.

It belongs to the peptidase S1C family.

The protein localises to the nucleus. Its function is as follows. Nuclear serine protease which mediates apoptosis. In Kluyveromyces lactis (strain ATCC 8585 / CBS 2359 / DSM 70799 / NBRC 1267 / NRRL Y-1140 / WM37) (Yeast), this protein is Pro-apoptotic serine protease NMA111 (NMA111).